Consider the following 122-residue polypeptide: Small ribosomal subunit protein uS13 (122 aa).

Residues L94–K122 form a disordered region. Residues Q101–K122 are compositionally biased toward basic residues.

This sequence belongs to the universal ribosomal protein uS13 family. In terms of assembly, part of the 30S ribosomal subunit. Forms a loose heterodimer with protein S19. Forms two bridges to the 50S subunit in the 70S ribosome.

Its function is as follows. Located at the top of the head of the 30S subunit, it contacts several helices of the 16S rRNA. In the 70S ribosome it contacts the 23S rRNA (bridge B1a) and protein L5 of the 50S subunit (bridge B1b), connecting the 2 subunits; these bridges are implicated in subunit movement. Contacts the tRNAs in the A and P-sites. This is Small ribosomal subunit protein uS13 from Chlamydia trachomatis serovar A (strain ATCC VR-571B / DSM 19440 / HAR-13).